A 459-amino-acid chain; its full sequence is ATP synthase subunit beta (459 aa).

Gly-148–Thr-155 is a binding site for ATP.

This sequence belongs to the ATPase alpha/beta chains family. As to quaternary structure, F-type ATPases have 2 components, CF(1) - the catalytic core - and CF(0) - the membrane proton channel. CF(1) has five subunits: alpha(3), beta(3), gamma(1), delta(1), epsilon(1). CF(0) has three main subunits: a(1), b(2) and c(9-12). The alpha and beta chains form an alternating ring which encloses part of the gamma chain. CF(1) is attached to CF(0) by a central stalk formed by the gamma and epsilon chains, while a peripheral stalk is formed by the delta and b chains.

Its subcellular location is the cell inner membrane. It carries out the reaction ATP + H2O + 4 H(+)(in) = ADP + phosphate + 5 H(+)(out). Produces ATP from ADP in the presence of a proton gradient across the membrane. The catalytic sites are hosted primarily by the beta subunits. The sequence is that of ATP synthase subunit beta from Thiobacillus denitrificans (strain ATCC 25259 / T1).